A 412-amino-acid chain; its full sequence is Putative membrane protein 337L (412 aa).

N-linked (GlcNAc...) asparagine; by host glycans are attached at residues N171, N186, N247, and N271. Residues 387–407 (VLITGIAVTGVAVLLFLLLMF) form a helical membrane-spanning segment.

Belongs to the IIV-6 337L family.

Its subcellular location is the virion membrane. This chain is Putative membrane protein 337L, found in Acheta domesticus (House cricket).